Consider the following 307-residue polypeptide: Aspartate carbamoyltransferase catalytic subunit (307 aa).

Residues Arg54 and Thr55 each coordinate carbamoyl phosphate. Residue Lys83 participates in L-aspartate binding. Carbamoyl phosphate-binding residues include Arg104, His132, and Gln135. 2 residues coordinate L-aspartate: Arg165 and Arg228. Residues Leu267 and Pro268 each coordinate carbamoyl phosphate.

This sequence belongs to the aspartate/ornithine carbamoyltransferase superfamily. ATCase family. Heterododecamer (2C3:3R2) of six catalytic PyrB chains organized as two trimers (C3), and six regulatory PyrI chains organized as three dimers (R2).

It catalyses the reaction carbamoyl phosphate + L-aspartate = N-carbamoyl-L-aspartate + phosphate + H(+). It functions in the pathway pyrimidine metabolism; UMP biosynthesis via de novo pathway; (S)-dihydroorotate from bicarbonate: step 2/3. In terms of biological role, catalyzes the condensation of carbamoyl phosphate and aspartate to form carbamoyl aspartate and inorganic phosphate, the committed step in the de novo pyrimidine nucleotide biosynthesis pathway. This chain is Aspartate carbamoyltransferase catalytic subunit, found in Clostridium acetobutylicum (strain ATCC 824 / DSM 792 / JCM 1419 / IAM 19013 / LMG 5710 / NBRC 13948 / NRRL B-527 / VKM B-1787 / 2291 / W).